The sequence spans 143 residues: Probable prefoldin subunit 2 (143 aa).

Belongs to the prefoldin subunit beta family. In terms of assembly, heterohexamer of two PFD-alpha type and four PFD-beta type subunits.

Functionally, binds specifically to cytosolic chaperonin (c-CPN) and transfers target proteins to it. Binds to nascent polypeptide chain and promotes folding in an environment in which there are many competing pathways for nonnative proteins. In Drosophila melanogaster (Fruit fly), this protein is Probable prefoldin subunit 2.